The primary structure comprises 483 residues: Regulatory protein ViaA (483 aa).

The protein belongs to the ViaA family. In terms of assembly, homodimer. Interacts with RavA.

It localises to the cytoplasm. Functionally, component of the RavA-ViaA chaperone complex, which may act on the membrane to optimize the function of some of the respiratory chains. ViaA stimulates the ATPase activity of RavA. The sequence is that of Regulatory protein ViaA from Shigella boydii serotype 18 (strain CDC 3083-94 / BS512).